A 259-amino-acid polypeptide reads, in one-letter code: Snake venom serine protease homolog rhinocerase 2 (259 aa).

The first 17 residues, 1–17, serve as a signal peptide directing secretion; that stretch reads VLIRVLANLLLLQLSYA. A propeptide spanning residues 18–23 is cleaved from the precursor; sequence QESSEL. The Peptidase S1 domain occupies 24–250; sequence VIGGDECDIN…YTDWIEGIIA (227 aa). 6 disulfides stabilise this stretch: Cys30–Cys164, Cys51–Cys67, Cys99–Cys257, Cys143–Cys211, Cys175–Cys190, and Cys201–Cys226. The N-linked (GlcNAc...) asparagine glycan is linked to Asn252.

It belongs to the peptidase S1 family. Snake venom subfamily. Expressed by the venom gland.

Its subcellular location is the secreted. Snake venom serine protease homolog that may act in the hemostasis system of the prey. This chain is Snake venom serine protease homolog rhinocerase 2, found in Bitis rhinoceros (West African gaboon viper).